Here is a 119-residue protein sequence, read N- to C-terminus: UPF0738 protein BAA_1286 (119 aa).

It belongs to the UPF0738 family.

The protein is UPF0738 protein BAA_1286 of Bacillus anthracis (strain A0248).